Here is a 607-residue protein sequence, read N- to C-terminus: Guanine nucleotide-binding protein-like 1 (607 aa).

A compositionally biased stretch (basic residues) spans 1–14 (MPRKKPFSVKQKKK). The tract at residues 1–81 (MPRKKPFSVK…GPRGYDPNRY (81 aa)) is disordered. Basic and acidic residues predominate over residues 15–26 (QLQDKRERKRGL). 3 positions are modified to phosphoserine: serine 32, serine 33, and serine 34. Threonine 48 and threonine 50 each carry phosphothreonine. A phosphoserine mark is found at serine 51 and serine 68. In terms of domain architecture, CP-type G spans 178-418 (WRQLWRVLEM…LCDCPGLIFP (241 aa)). 225–228 (NKVD) lines the GTP pocket. Phosphoserine is present on serine 324. Residues 367 to 374 (GFPNVGKS) and 411 to 415 (DCPGL) contribute to the GTP site. Positions 547–607 (GPAGDEEEEE…PYALLGEDEC (61 aa)) are disordered. Positions 550 to 584 (GDEEEEEEEELSSSCEEEGEEDRDADEEGEGDEDT) are enriched in acidic residues. Phosphoserine is present on residues serine 561, serine 562, and serine 563.

The protein belongs to the TRAFAC class YlqF/YawG GTPase family.

Possible regulatory or functional link with the histocompatibility cluster. The chain is Guanine nucleotide-binding protein-like 1 (GNL1) from Pongo abelii (Sumatran orangutan).